Consider the following 322-residue polypeptide: CXXC-type zinc finger protein 5 (322 aa).

Residues 1–10 (MSSLGGGSQD) show a composition bias toward gly residues. The segment at 1-100 (MSSLGGGSQD…SGGGSMMGGE (100 aa)) is disordered. Composition is skewed to low complexity over residues 11–20 (AGGSSSSSTN) and 28–52 (SGPKAGAADKSAVVAAATPASVADD). Residue Thr-53 is modified to Phosphothreonine. Positions 87–97 (SSGGSGGGSMM) are enriched in gly residues. A CXXC-type zinc finger spans residues 256-297 (GKKKRKRCGMCAPCRRRINCEQCSSCRNRKTGHQICKFRKCE). Positions 257 to 262 (KKKRKR) match the Nuclear localization signal motif. Zn(2+) is bound by residues Cys-263, Cys-266, Cys-269, Cys-275, Cys-278, Cys-281, Cys-291, and Cys-296.

Interacts with DVL1. Interacts with RBPJ.

The protein resides in the nucleus. It is found in the cytoplasm. In terms of biological role, may indirectly participate in activation of the NF-kappa-B and MAPK pathways. Acts as a mediator of BMP4-mediated modulation of canonical Wnt signaling activity in neural stem cells. Required for DNA damage-induced ATM phosphorylation, p53 activation and cell cycle arrest. Involved in myelopoiesis. Binds to the oxygen responsive element of COX4I2 and represses its transcription under hypoxia conditions (4% oxygen), as well as normoxia conditions (20% oxygen). May repress COX4I2 transactivation induced by CHCHD2 and RBPJ. Binds preferentially to DNA containing cytidine-phosphate-guanosine (CpG) dinucleotides over CpH (H=A, T, and C), hemimethylated-CpG and hemimethylated-hydroxymethyl-CpG. The polypeptide is CXXC-type zinc finger protein 5 (CXXC5) (Pongo abelii (Sumatran orangutan)).